Reading from the N-terminus, the 474-residue chain is PRAME family member 2 (474 aa).

An LRR 1; degenerate repeat occupies 97–124 (RWKLQVLDLRDVDENFWARWPGAWALSC). The stretch at 179 to 203 (HLCCSKLVNYLTPIKYLRKSLKIIY) is one LRR 2; degenerate repeat. An LRR 3; degenerate repeat occupies 204–230 (INSIGELEIHNTCWPHLIRKLYCYLKE). The LRR 4; degenerate repeat unit spans residues 231 to 265 (MKTLCKLVFSRCHHYTSDNELEGWLVTRFTSVFLR). 5 LRR repeats span residues 266–291 (LEHL…IRCL), 292–323 (QNPL…GYLK), 324–342 (HLNL…PLGA), 348–375 (AASL…GLSC), and 376–400 (CSQL…LLRH).

It belongs to the PRAME family.

In Homo sapiens (Human), this protein is PRAME family member 2.